The following is a 147-amino-acid chain: UPF0306 protein YhbP (147 aa).

It belongs to the UPF0306 family.

In Shigella boydii serotype 4 (strain Sb227), this protein is UPF0306 protein YhbP.